The chain runs to 791 residues: FHF complex subunit HOOK-interacting protein 1B (791 aa).

Disordered stretches follow at residues 465-510 and 524-556; these read APSP…VPRP and SLGG…SPAE. Ser-467 carries the phosphoserine modification. A compositionally biased stretch (low complexity) spans 496-510; that stretch reads SPSVDSSSVVTVPRP. Phosphoserine occurs at positions 524, 537, 543, 547, and 679. The segment covering 541-552 has biased composition (low complexity); the sequence is TASPTSSPGRRP. The residue at position 708 (Thr-708) is a Phosphothreonine. The residue at position 716 (Ser-716) is a Phosphoserine.

The protein belongs to the FHIP family. As to quaternary structure, component of the FTS/Hook/FHIP complex (FHF complex), composed of AKTIP/FTS, FHIP1B, and one or more members of the Hook family of proteins HOOK1, HOOK2, and HOOK3. The FHF complex associates with the homotypic vesicular sorting complex (the HOPS complex).

Component of the FTS/Hook/FHIP complex (FHF complex). The FHF complex may function to promote vesicle trafficking and/or fusion via the homotypic vesicular protein sorting complex (the HOPS complex). FHF complex promotes the distribution of AP-4 complex to the perinuclear area of the cell. The protein is FHF complex subunit HOOK-interacting protein 1B (Fhip1b) of Rattus norvegicus (Rat).